Here is a 472-residue protein sequence, read N- to C-terminus: Eukaryotic translation initiation factor 2 subunit 3, Y-linked (472 aa).

At Ala2 the chain carries N-acetylalanine. A Phosphoserine modification is found at Ser16. The tr-type G domain occupies 39-247; sequence QATINIGTIG…YIVKKIPVPL (209 aa). The G1 stretch occupies residues 48–55; the sequence is GHVAHGKS. GTP is bound at residue 51–56; sequence AHGKST. The G2 stretch occupies residues 76 to 80; that stretch reads NITIK. Residues 134-137 form a G3 region; that stretch reads DCPG. Residues 190–193 and 225–227 each bind GTP; these read NKID and SAQ. The interval 190–193 is G4; sequence NKID. The tract at residues 225 to 227 is G5; that stretch reads SAQ.

It belongs to the TRAFAC class translation factor GTPase superfamily. Classic translation factor GTPase family. EIF2G subfamily. As to quaternary structure, eIF2 is a heterotrimer composed of an alpha (EIF2S1), a beta (EIF2S2) and a gamma (Eif2s3x and Eif2s3y) chain. eIF2 is member of the 43S pre-initiation complex (43S PIC). In terms of tissue distribution, widely expressed in males.

The catalysed reaction is GTP + H2O = GDP + phosphate + H(+). Member of the eIF2 complex that functions in the early steps of protein synthesis by forming a ternary complex with GTP and initiator tRNA. This complex binds to a 40S ribosomal subunit, followed by mRNA binding to form the 43S pre-initiation complex (43S PIC). Junction of the 60S ribosomal subunit to form the 80S initiation complex is preceded by hydrolysis of the GTP bound to eIF2 and release of an eIF2-GDP binary complex. In order for eIF2 to recycle and catalyze another round of initiation, the GDP bound to eIF2 must exchange with GTP by way of a reaction catalyzed by eIF-2B. Along with its paralog on chromosome X, may contribute to spermatogenesis up to the round spermatid stage. This Rattus norvegicus (Rat) protein is Eukaryotic translation initiation factor 2 subunit 3, Y-linked (Eif2s3y).